The sequence spans 230 residues: V-type proton ATPase subunit E1 (230 aa).

Met1 bears the N-acetylmethionine mark. Residues 8-67 adopt a coiled-coil conformation; that stretch reads RQIQQMVRFIRQEAEEKANEISVSAEEEFNIEKLQLVEAEKKKIRQDYEKKEKQADVRKK. At Ser178 the chain carries Phosphoserine.

This sequence belongs to the V-ATPase E subunit family. As to quaternary structure, V-ATPase is a heteromultimeric enzyme composed of a peripheral catalytic V1 complex (components A to H) attached to an integral membrane V0 proton pore complex (components: a, c, c'', d and e).

The protein localises to the vacuole membrane. Functionally, subunit of the peripheral V1 complex of vacuolar ATPase essential for assembly or catalytic function. V-ATPase is responsible for acidifying a variety of intracellular compartments in eukaryotic cells. Required for Golgi organization and vacuole function in embryogenesis. The sequence is that of V-type proton ATPase subunit E1 (VHA-E1) from Arabidopsis thaliana (Mouse-ear cress).